Consider the following 128-residue polypeptide: Sulfurtransferase TusD (128 aa).

The active-site Cysteine persulfide intermediate is Cys-78.

This sequence belongs to the DsrE/TusD family. In terms of assembly, heterohexamer, formed by a dimer of trimers. The hexameric TusBCD complex contains 2 copies each of TusB, TusC and TusD. The TusBCD complex interacts with TusE.

Its subcellular location is the cytoplasm. Functionally, part of a sulfur-relay system required for 2-thiolation of 5-methylaminomethyl-2-thiouridine (mnm(5)s(2)U) at tRNA wobble positions. Accepts sulfur from TusA and transfers it in turn to TusE. This is Sulfurtransferase TusD from Salmonella agona (strain SL483).